The following is a 324-amino-acid chain: Biotin synthase (324 aa).

The region spanning 43-273 (FCGNYFNFCS…HVFLRLAGGR (231 aa)) is the Radical SAM core domain. [4Fe-4S] cluster is bound by residues Cys61, Cys65, and Cys68. Residues Ser105, Cys138, Cys198, and Arg268 each coordinate [2Fe-2S] cluster.

The protein belongs to the radical SAM superfamily. Biotin synthase family. Homodimer. [4Fe-4S] cluster serves as cofactor. It depends on [2Fe-2S] cluster as a cofactor.

The enzyme catalyses (4R,5S)-dethiobiotin + (sulfur carrier)-SH + 2 reduced [2Fe-2S]-[ferredoxin] + 2 S-adenosyl-L-methionine = (sulfur carrier)-H + biotin + 2 5'-deoxyadenosine + 2 L-methionine + 2 oxidized [2Fe-2S]-[ferredoxin]. It participates in cofactor biosynthesis; biotin biosynthesis; biotin from 7,8-diaminononanoate: step 2/2. Functionally, catalyzes the conversion of dethiobiotin (DTB) to biotin by the insertion of a sulfur atom into dethiobiotin via a radical-based mechanism. This is Biotin synthase from Campylobacter hominis (strain ATCC BAA-381 / DSM 21671 / CCUG 45161 / LMG 19568 / NCTC 13146 / CH001A).